Reading from the N-terminus, the 284-residue chain is ELMO domain-containing protein B (284 aa).

An ELMO domain is found at 124–276 (EHEASLERLW…EFETKISQNS (153 aa)).

This chain is ELMO domain-containing protein B (elmoB), found in Dictyostelium discoideum (Social amoeba).